The following is a 1397-amino-acid chain: DNA-directed RNA polymerase subunit beta' (1397 aa).

Zn(2+)-binding residues include cysteine 75, cysteine 77, cysteine 90, and cysteine 93. Positions 465, 467, and 469 each coordinate Mg(2+). Residues cysteine 819, cysteine 893, cysteine 900, and cysteine 903 each contribute to the Zn(2+) site.

It belongs to the RNA polymerase beta' chain family. In terms of assembly, the RNAP catalytic core consists of 2 alpha, 1 beta, 1 beta' and 1 omega subunit. When a sigma factor is associated with the core the holoenzyme is formed, which can initiate transcription. Requires Mg(2+) as cofactor. Zn(2+) is required as a cofactor.

The catalysed reaction is RNA(n) + a ribonucleoside 5'-triphosphate = RNA(n+1) + diphosphate. In terms of biological role, DNA-dependent RNA polymerase catalyzes the transcription of DNA into RNA using the four ribonucleoside triphosphates as substrates. The protein is DNA-directed RNA polymerase subunit beta' of Acinetobacter baylyi (strain ATCC 33305 / BD413 / ADP1).